The sequence spans 271 residues: Transmembrane protein 150A (271 aa).

Topologically, residues 1-2 are cytoplasmic; that stretch reads MT. A helical transmembrane segment spans residues 3–23; the sequence is AWILLPVSLSAFSITGIWTVY. The Extracellular portion of the chain corresponds to 24–75; it reads AMAVMNHHVCPVENWSYNESCPPDPAEQGGPKTCCTLDDVPLISKCGSYPPE. 2 N-linked (GlcNAc...) asparagine glycosylation sites follow: Asn37 and Asn41. Residues 76-96 form a helical membrane-spanning segment; sequence SCLFSLIGNMGAFMVALICLL. The Cytoplasmic portion of the chain corresponds to 97 to 108; the sequence is RYGQLLEQSRHS. The helical transmembrane segment at 109–129 threads the bilayer; sequence WVNTTALITGCTNAAGLLVVG. At 130–140 the chain is on the extracellular side; that stretch reads NFQVDHARSLH. A helical membrane pass occupies residues 141–161; the sequence is YVGAGVAFPAGLLFVCLHCAL. Topologically, residues 162–178 are cytoplasmic; it reads SYQGATAPLDLAVAYLR. Residues 179-199 form a helical membrane-spanning segment; it reads SVLAVIAFITLVLSGVFFVHE. Topologically, residues 200–211 are extracellular; the sequence is SSQLQHGAALCE. Residues 212 to 232 form a helical membrane-spanning segment; sequence WVCVIDILIFYGTFSYEFGAV. Residues 233-271 lie on the Cytoplasmic side of the membrane; the sequence is SSDTLVAALQPTPGRACKSSGSSSTSTHLNCAPESIAMI.

This sequence belongs to the DRAM/TMEM150 family. As to quaternary structure, interacts (via C-terminal cytoplasmic tail) with PI4KA.

The protein localises to the cell membrane. In terms of biological role, regulates localization of phosphatidylinositol 4-kinase (PI4K) to the plasma membrane, possibly by reducing the association of TTC7 (TTC7A or TTC7B) with the PI4K complex. Acts as a regulator of phosphatidylinositol 4-phosphate (PtdIns(4)P) synthesis. May also play a role in fasting-induced catabolism. The chain is Transmembrane protein 150A (TMEM150A) from Homo sapiens (Human).